The sequence spans 152 residues: Deoxyuridine 5'-triphosphate nucleotidohydrolase (152 aa).

Residues 71 to 73, Asn84, 88 to 90, and Met98 each bind substrate; these read RSG and LID.

The protein belongs to the dUTPase family. Requires Mg(2+) as cofactor.

The catalysed reaction is dUTP + H2O = dUMP + diphosphate + H(+). It functions in the pathway pyrimidine metabolism; dUMP biosynthesis; dUMP from dCTP (dUTP route): step 2/2. This enzyme is involved in nucleotide metabolism: it produces dUMP, the immediate precursor of thymidine nucleotides and it decreases the intracellular concentration of dUTP so that uracil cannot be incorporated into DNA. This chain is Deoxyuridine 5'-triphosphate nucleotidohydrolase, found in Hahella chejuensis (strain KCTC 2396).